Reading from the N-terminus, the 160-residue chain is Large ribosomal subunit protein uL22c (160 aa).

This sequence belongs to the universal ribosomal protein uL22 family. As to quaternary structure, part of the 50S ribosomal subunit.

It is found in the plastid. The protein localises to the chloroplast. In terms of biological role, this protein binds specifically to 23S rRNA. The globular domain of the protein is located near the polypeptide exit tunnel on the outside of the subunit, while an extended beta-hairpin is found that lines the wall of the exit tunnel in the center of the 70S ribosome. The chain is Large ribosomal subunit protein uL22c (rpl22) from Nasturtium officinale (Watercress).